Consider the following 902-residue polypeptide: MKFADHLTESAIPEWRDKYIDYKVGKKKLRRYKEKLDAEEEQSSSYRSWMPSVSVYQTAFQQREPGKSRSDGDYRSGPAFKKDYSALQREFVADFIEDWLISFQLSKCNEFYLWLLKECDKKFEVLQSQLHYYSLQKNYERDNLNRSSSNVDMSTSLYAAGLAGRSDSRVNSIDSDSRSVMYGSMPCTKEAKKPRLSLLAYCQKVLKDNRLLPSWPKRGFSLLQDLRQDASSRGRETFAFGASFLETMTTTQARNLLSNAIIEYYLYLQLVKSFRDINVTGFRKMVKKFDKTCHTRELTTFMSYARTHYTLFKHADANVQLVAQKMQQITSSQPTPTSELSSAQRDKEPITWLETQITEWFTTALTNSPKDRKHNTHKLKKLTIQYSISEQMVHRNNRSIVQMLVVGLGIGVSMTLITYTLYLGISSEETSFTHKILFPLWGGWYMVLLIAFLFLVNCFIWHRTGINYRFIMLGEIQSKNGTQFFNNDFATSKIPLKLYFLTFFIVPCAVCSMLSFALEKLTPLGFLYIGIVSFLFLCPSGLIPYWDKVVHTRKWLVVTLIRLMMSGFFPVEFGDFFLGDIICSLTYSIADIAMFFCVYSHTPNNLCGSSHSRAMGVLSCLPSYWRFMQCLRRFADSGDWFPHLLNAAKYTLGIAYNATLCAYRLSDRSEQRRTPFIVCATLNSILTSAWDLVMDWSFAHNTTSYNWLLRDDLYLAGKKNWENGSYSFSRKLVYYFAMIWDILIRFEWIVYAIAPQTIQQSAVTSFILALLEVLRRFVWIIFRVENEHVANVHLFRVTGDAPLPYPIAQVGDDSMDSSDLGSKAFSSLNDIPITPSHDNNPHSFAEPMPAYRGTFRRRSSVFENISRSIPWAHATDFQRPTVNTVDDRSPETDSESEVESIM.

The SPX domain maps to Met1–Ser303. The Cytoplasmic segment spans residues Met1–Leu404. Phosphoserine is present on residues Ser172 and Ser179. A helical transmembrane segment spans residues Val405–Ile425. Residues Ser426–Lys435 are Extracellular-facing. A helical transmembrane segment spans residues Ile436–Val456. At Asn457 to Lys497 the chain is on the cytoplasmic side. Residues Leu498–Leu518 form a helical membrane-spanning segment. The Extracellular portion of the chain corresponds to Glu519–Thr522. The chain crosses the membrane as a helical span at residues Pro523–Ile543. Residues Pro544–Lys554 lie on the Cytoplasmic side of the membrane. Residues Trp555 to Asp575 traverse the membrane as a helical segment. Position 576 (Phe576) is a topological domain, extracellular. A helical transmembrane segment spans residues Phe577 to Tyr599. Topologically, residues Ser600 to Leu732 are cytoplasmic. Positions Leu606 to Met815 constitute an EXS domain. The helical transmembrane segment at Val733–Ile753 threads the bilayer. Residues Ala754–Ser761 are Extracellular-facing. The chain crosses the membrane as a helical span at residues Ala762–Phe782. Topologically, residues Arg783–Met902 are cytoplasmic. Phosphoserine occurs at positions 859 and 860. Residues Val882–Met902 form a disordered region. A compositionally biased stretch (acidic residues) spans Thr892–Met902.

Belongs to the SYG1 (TC 2.A.94) family.

The protein localises to the cell membrane. Its function is as follows. May function in G-protein coupled signal transduction. This is Protein SYG1 (SYG1) from Saccharomyces cerevisiae (strain ATCC 204508 / S288c) (Baker's yeast).